Consider the following 90-residue polypeptide: Molybdopterin synthase sulfur carrier subunit (90 aa).

Gly-90 carries the 1-thioglycine; alternate modification. The residue at position 90 (Gly-90) is a Glycyl adenylate; alternate.

Belongs to the MoaD family. MOCS2A subfamily. Heterotetramer; composed of 2 small (Mocs2A) and 2 large (Mocs2B) subunits. In terms of processing, C-terminal thiocarboxylation occurs in 2 steps, it is first acyl-adenylated (-COAMP) via the hesA/moeB/thiF part of MOCS3, then thiocarboxylated (-COSH) via the rhodanese domain of MOCS3.

Its subcellular location is the cytoplasm. The protein operates within cofactor biosynthesis; molybdopterin biosynthesis. Its function is as follows. Acts as a sulfur carrier required for molybdopterin biosynthesis. Component of the molybdopterin synthase complex that catalyzes the conversion of precursor Z into molybdopterin by mediating the incorporation of 2 sulfur atoms into precursor Z to generate a dithiolene group. In the complex, serves as sulfur donor by being thiocarboxylated (-COSH) at its C-terminus by MOCS3. After interaction with Mocs2B, the sulfur is then transferred to precursor Z to form molybdopterin. This is Molybdopterin synthase sulfur carrier subunit from Drosophila simulans (Fruit fly).